Consider the following 397-residue polypeptide: Izumo sperm-egg fusion protein 1 (397 aa).

The first 21 residues, Met-1 to Pro-21, serve as a signal peptide directing secretion. 5 disulfides stabilise this stretch: Cys-22/Cys-149, Cys-25/Cys-152, Cys-135/Cys-159, Cys-139/Cys-165, and Cys-182/Cys-233. Residues Cys-22–Arg-319 lie on the Extracellular side of the membrane. The interval Trp-148–Arg-160 is important for interaction with IZUMO1R. The Ig-like C2-type domain maps to Glu-167 to Thr-251. Asn-204 carries N-linked (GlcNAc...) asparagine glycosylation. The segment at Glu-271 to Leu-292 is disordered. The chain crosses the membrane as a helical span at residues Leu-320 to Leu-340. At His-341 to Asn-397 the chain is on the cytoplasmic side. Residues Asn-351–Asn-397 are disordered. Residues Ala-360 to Met-373 show a composition bias toward polar residues. Ser-379 carries the post-translational modification Phosphoserine. Residues Ser-388–Asn-397 show a composition bias toward basic and acidic residues.

It belongs to the Izumo family. As to quaternary structure, monomer, homodimer; disulfide-linked and homooligomer; depending on the context. Interacts with IZUMO1R/JUNO. IZUMO1 and IZUMO1R/JUNO form a complex with 1:1 stoichiometry. In gamete recognition, IZUMO1R/JUNO first binds to monomeric IZUMO1. The weak, but specific interaction with IZUMO1R/JUNO induces IZUMO1 homodimerization. The process follows a tight binding phase where IZUMO1 bends the entire structure towards the sperm membrane side through a thiol-disulfide exchange reaction. The molecule no longer binds to IZUMO1R/JUNO and instead binds to a putative second oocyte receptor. Interacts with ACE3. Part of a oolemmal binding multimeric complex (IZUMO1 complex) composed at least of IZUMO1 and GLIPR1L1; the complex assemblage is influenced by the maturation status of the male germ cell. Interacts with GLIPR1L1. Interacts with FREY; the interaction retains IZUMO1 at the endoplasmic reticulum membrane and coordinates IZUMO1 complex assembly. Interacts with WDR54. Forms a complex with SPACA6 and TMEM81 on spermatocyte cell membrane. Post-translationally, N-glycosylated. Glycosylation is not essential for fusion and for proper protein trafficking in sperm. In terms of processing, phosphorylated. The cytoplasmic C-terminus is phosphorylated and undergoes phosphorylation changes during epididymal transit. In terms of tissue distribution, sperm-specific (at protein level). Detectable on sperm surface only after the acrosome reaction. Expressed in spermatozoa, more abundantly expressed in the head than the tail (at protein level).

The protein localises to the cell membrane. It localises to the cytoplasmic vesicle. It is found in the secretory vesicle. The protein resides in the acrosome membrane. In terms of biological role, essential sperm cell-surface protein required for fertilization by acting as a ligand for IZUMO1R/JUNO receptor on egg. The IZUMO1:IZUMO1R/JUNO interaction is a necessary adhesion event between sperm and egg that is required for fertilization but is not sufficient for cell fusion. The ligand-receptor interaction probably does not act as a membrane 'fusogen'. Plays a critical role in sperm-oolemma binding prior to plasma membrane fusion. Can mediate cell-cell fusion in cultured mammalian cells independently of its binding to IZUMO1R/JUNO. The polypeptide is Izumo sperm-egg fusion protein 1 (Mus musculus (Mouse)).